Consider the following 154-residue polypeptide: CASP-like protein 5C2 (154 aa).

At 1–17 (MEHVPGSFGTSASFALR) the chain is on the cytoplasmic side. Residues 18-38 (FGQTIFSAASLIFMCFDFDFY) form a helical membrane-spanning segment. Residues 39–41 (DFT) are Extracellular-facing. The helical transmembrane segment at 42–62 (TFCYLAMVMAIVTPWSILLAL) threads the bilayer. The Cytoplasmic segment spans residues 63–81 (TDTYSVLVKLLPQELRVLS). Residues 82–102 (IVFAGDFVLSFLSLGGACAVA) traverse the membrane as a helical segment. The Extracellular portion of the chain corresponds to 103 to 128 (SATELLASADGKICDGSLCIQYQVSA). Residues 129–149 (ALAFLCWFLLLASALFNFWSL) form a helical membrane-spanning segment. At 150 to 154 (PSLYY) the chain is on the cytoplasmic side.

The protein belongs to the Casparian strip membrane proteins (CASP) family. In terms of assembly, homodimer and heterodimers.

The protein resides in the cell membrane. This chain is CASP-like protein 5C2, found in Arabidopsis thaliana (Mouse-ear cress).